Here is an 84-residue protein sequence, read N- to C-terminus: Small ribosomal subunit protein uS17 (84 aa).

It belongs to the universal ribosomal protein uS17 family. In terms of assembly, part of the 30S ribosomal subunit.

Functionally, one of the primary rRNA binding proteins, it binds specifically to the 5'-end of 16S ribosomal RNA. The sequence is that of Small ribosomal subunit protein uS17 from Proteus mirabilis (strain HI4320).